A 600-amino-acid polypeptide reads, in one-letter code: Methionine--tRNA ligase (600 aa).

The 'HIGH' region motif lies at 11–21 (PYANGPRHIGH). Zn(2+) is bound by residues Cys-143, Cys-146, Cys-156, and Cys-159. The 'KMSKS' region signature appears at 351–355 (KFSSS). Ser-354 contributes to the ATP binding site.

Belongs to the class-I aminoacyl-tRNA synthetase family. MetG type 1 subfamily. As to quaternary structure, monomer. Zn(2+) serves as cofactor.

The protein resides in the cytoplasm. The catalysed reaction is tRNA(Met) + L-methionine + ATP = L-methionyl-tRNA(Met) + AMP + diphosphate. Is required not only for elongation of protein synthesis but also for the initiation of all mRNA translation through initiator tRNA(fMet) aminoacylation. This Salinispora arenicola (strain CNS-205) protein is Methionine--tRNA ligase.